The following is a 582-amino-acid chain: TBCC domain-containing protein 1 (582 aa).

The span at 140-153 (EWPSPRSRSPSSSS) shows a compositional bias: low complexity. A disordered region spans residues 140–159 (EWPSPRSRSPSSSSSERDAK). The C-CAP/cofactor C-like domain occupies 305–451 (PPGSRLVLMS…LWNQPLLFGV (147 aa)). Residues 547-558 (SLLPPTITPSSS) are compositionally biased toward low complexity. The tract at residues 547–582 (SLLPPTITPSSSAEHWSSNQNTLKEQTHEQPTGTVC) is disordered. Residues 559–582 (AEHWSSNQNTLKEQTHEQPTGTVC) show a composition bias toward polar residues.

It belongs to the TBCC family.

Its subcellular location is the cytoplasm. It is found in the cytoskeleton. The protein localises to the microtubule organizing center. The protein resides in the centrosome. It localises to the spindle pole. May play a role in the regulation of centrosome and Golgi apparatus positioning. This chain is TBCC domain-containing protein 1 (tbccd1), found in Danio rerio (Zebrafish).